A 107-amino-acid chain; its full sequence is Acetyl-CoA acetyltransferase (107 aa).

Cys-88 functions as the Acyl-thioester intermediate in the catalytic mechanism.

Belongs to the thiolase-like superfamily. Thiolase family. Homotetramer.

The protein localises to the cytoplasm. It carries out the reaction 2 acetyl-CoA = acetoacetyl-CoA + CoA. Functionally, catalyzes the condensation of two molecules of acetyl-CoA to produce acetoacetyl-CoA. The sequence is that of Acetyl-CoA acetyltransferase (thi) from Clostridioides difficile (Peptoclostridium difficile).